The sequence spans 62 residues: Sperm protamine P1 (62 aa).

Residues 1-62 (MARYRHSRSR…RYSRRRRRRY (62 aa)) form a disordered region.

It belongs to the protamine P1 family. Testis.

Its subcellular location is the nucleus. It is found in the chromosome. Protamines substitute for histones in the chromatin of sperm during the haploid phase of spermatogenesis. They compact sperm DNA into a highly condensed, stable and inactive complex. In Thylogale stigmatica (Red-legged pademelon), this protein is Sperm protamine P1 (PRM1).